The following is a 206-amino-acid chain: MKRPVLIGITGGTGSGKSTVAKEIYNKFDEACIAMIEQDSYYKDQSSIPFEERCKKNYDHPDAFDNELLIDHLKNLVDLNVIEKPIYDFEAHNRKEETIKVEPRDIIIVEGILVLQDPRVRELLDIKIYVDTDADVRIIRRLLRDINERGRTVDSVINQYLTVVRPMHMQFIEPSKRYADIIIPEGGHNRVAVDMMVANIKHLLQK.

ATP is bound at residue 11 to 18; sequence GGTGSGKS.

This sequence belongs to the uridine kinase family.

The protein resides in the cytoplasm. The enzyme catalyses uridine + ATP = UMP + ADP + H(+). It carries out the reaction cytidine + ATP = CMP + ADP + H(+). The protein operates within pyrimidine metabolism; CTP biosynthesis via salvage pathway; CTP from cytidine: step 1/3. It functions in the pathway pyrimidine metabolism; UMP biosynthesis via salvage pathway; UMP from uridine: step 1/1. The polypeptide is Uridine kinase (Clostridium botulinum (strain 657 / Type Ba4)).